Reading from the N-terminus, the 557-residue chain is MSTSVFNRRWAALLLEALARHGVRHVCIAPGSRSTPLTLAAAANKSFICHTHFDERGLGHLALGLAKASREPVAVIVTSGTAAANLYPSLIEAGLTGERLVFLTADRPPELINCGANQAIRQNGLYASHPALSIDLPRPTTDIPARWLVSTVDSAMARLQHGALHINCPFAEPLYGGDEQQYADWSATLGDWWQGNHPWLREVDPHQVLKQPDWFFWRQKRGVIVAGRMSADEGEHLAQWAEMLGWPLIGDVLSQTGQPLPCADLWLAQPQAQKRLAEAQLVVQFGSSLTGKRLLQWQEQCQPQEYWLIDDLPGRLDPAHHRGRRIRSSVAQWLELHPAQPRTPWADELTMLADNALDAVSGHLVNRFGEAQLAHRLPELLPENGQLFLGNSLIVRLIDALTRLPAGYPVFSNRGASGIDGLISTAAGVQRATAKPTLAVVGDLSALYDLNALALLRQCSAPTVLIVVNNNGGQIFSLLPTPEEDRQRFYCMPQNVEFSHAAAMFQLAYARPENWGQLLQAVEQGWRHGGATLIELQVPPSDGAQTLQHLVQQMTEQ.

This sequence belongs to the TPP enzyme family. MenD subfamily. As to quaternary structure, homodimer. It depends on Mg(2+) as a cofactor. Mn(2+) serves as cofactor. Requires thiamine diphosphate as cofactor.

The catalysed reaction is isochorismate + 2-oxoglutarate + H(+) = 5-enolpyruvoyl-6-hydroxy-2-succinyl-cyclohex-3-ene-1-carboxylate + CO2. Its pathway is quinol/quinone metabolism; 1,4-dihydroxy-2-naphthoate biosynthesis; 1,4-dihydroxy-2-naphthoate from chorismate: step 2/7. The protein operates within quinol/quinone metabolism; menaquinone biosynthesis. Catalyzes the thiamine diphosphate-dependent decarboxylation of 2-oxoglutarate and the subsequent addition of the resulting succinic semialdehyde-thiamine pyrophosphate anion to isochorismate to yield 2-succinyl-5-enolpyruvyl-6-hydroxy-3-cyclohexene-1-carboxylate (SEPHCHC). The chain is 2-succinyl-5-enolpyruvyl-6-hydroxy-3-cyclohexene-1-carboxylate synthase from Serratia proteamaculans (strain 568).